Here is a 594-residue protein sequence, read N- to C-terminus: Aspartate--tRNA(Asp/Asn) ligase (594 aa).

Glu-175 lines the L-aspartate pocket. The tract at residues 199–202 (QIYK) is aspartate. L-aspartate is bound by residues Arg-221 and His-454. 221–223 (RDE) provides a ligand contact to ATP. Glu-488 is an ATP binding site. Arg-495 is a binding site for L-aspartate. ATP is bound at residue 540–543 (GIDR).

It belongs to the class-II aminoacyl-tRNA synthetase family. Type 1 subfamily. Homodimer.

The protein localises to the cytoplasm. The enzyme catalyses tRNA(Asx) + L-aspartate + ATP = L-aspartyl-tRNA(Asx) + AMP + diphosphate. Aspartyl-tRNA synthetase with relaxed tRNA specificity since it is able to aspartylate not only its cognate tRNA(Asp) but also tRNA(Asn). Reaction proceeds in two steps: L-aspartate is first activated by ATP to form Asp-AMP and then transferred to the acceptor end of tRNA(Asp/Asn). The polypeptide is Aspartate--tRNA(Asp/Asn) ligase (Chelativorans sp. (strain BNC1)).